Consider the following 752-residue polypeptide: Complement C2 (752 aa).

A signal peptide spans 1–20 (MGPLMVLFCLLFLYPGLADS). Sushi domains follow at residues 22-86 (PSCP…VCKP), 87-146 (VRCP…VCDN), and 149-206 (GHCP…ICRQ). Intrachain disulfides connect C24-C64, C51-C84, C89-C131, C117-C144, C151-C191, and C177-C204. A glycan (N-linked (GlcNAc...) asparagine) is linked at N29. N-linked (GlcNAc...) asparagine glycosylation is present at N112. The VWFA domain maps to 254 to 452 (NLYLLLDCSQ…KALHQVFEHM (199 aa)). Positions 260–264 (DCSQS) match the MIDAS-like motif motif. Mg(2+) contacts are provided by S262 and S264. Positions 262 and 264 each coordinate Mn(2+). N290 and N333 each carry an N-linked (GlcNAc...) asparagine glycan. T337 contacts Mg(2+). T337 provides a ligand contact to Mn(2+). Disulfide bonds link C463–C581, C492–C508, and C584–C600. The region spanning 464-744 (GVGNMSANAS…MQPWLRQHLG (281 aa)) is the Peptidase S1 domain. N-linked (GlcNAc...) asparagine glycans are attached at residues N467 and N471. Residues H507 and D561 each act as charge relay system in the active site. N621 carries N-linked (GlcNAc...) asparagine glycosylation. 2 disulfides stabilise this stretch: C638-C665 and C675-C705. N651 carries N-linked (GlcNAc...) (complex) asparagine glycosylation. The Charge relay system role is filled by S679.

The protein belongs to the peptidase S1 family. Serine protease component of the C3 convertase, also named C4bC2b, composed of the serine protease complement C2b and complement C4b. Serine protease component of the C5 convertase, also named C4bC2bC3b, composed of the serine protease complement C2b, complement C3b, as well as complement C4b. As to quaternary structure, (Microbial infection) Interacts with Schistosoma haematobium TOR (via N-terminal extracellular domain). This results in inhibition of the classical and lectin pathway of complement activation, probably due to interference with binding of C2a to C4b such that C3 convertase cannot be formed. This infers resistance to complement-mediated cell lysis, allowing parasite survival and infection. Mg(2+) is required as a cofactor. It depends on Mn(2+) as a cofactor. In terms of processing, cleaved and activated by different proteases depending on the complement pathway to generate complement C2a and serine protease complement C2b chains. Cleaved and activated by C1S following activation by the classical complement system. Cleaved and activated by MASP2 following activation by the lectin complement system. Cleaved and activated by GZMK following activation by the GZMK complement system.

It localises to the secreted. The protein localises to the cell surface. The catalysed reaction is Selective cleavage of Arg-|-Ser bond in complement component C3 alpha-chain to form C3a and C3b, and Arg-|-Xaa bond in complement component C5 alpha-chain to form C5a and C5b.. In terms of biological role, precursor of the catalytic component of the C3 and C5 convertase complexes, which are part of the complement pathway, a cascade of proteins that leads to phagocytosis and breakdown of pathogens and signaling that strengthens the adaptive immune system. Component C2 is part of the classical, lectin and GZMK complement systems. Functionally, catalytic component of the complement C3 and C5 convertase complexes. Following complement activation, recruited to the surface of pathogens by complement C4b opsonin to form the C3 convertase, or C3b and C4b opsonins to form the C5 convertase. As part of the C3 convertase, cleaves and activate C3 into C3a anaphylatoxin and C3b opsonin, the next components of the complement pathways. As part of the C5 convertase, cleaves and activate C5 into C5a anaphylatoxin and C5b component of the membrane attack complex. This Homo sapiens (Human) protein is Complement C2.